A 390-amino-acid chain; its full sequence is Multidrug resistance protein MdtL (390 aa).

12 helical membrane-spanning segments follow: residues 4–24, 42–62, 69–89, 93–113, 131–151, 158–178, 199–221, 245–265, 269–289, 293–313, 316–336, and 353–375; these read FLICSFALVLLYPAGIDMYLV, IAFSVYLAGMATAMLFAGKVA, PVAIAGAVIFIIASMLCSRAT, LFLTGRFIQGIGAGCCYVVAF, LLNGITCIVPVLAPVLGHLIM, SLFYTMIAMGIAVCLLSVFIL, LLNRFFLSRLAITTLSVSVILTF, ALTAGISMAVSFSTPFALSVF, TLMLTSQGLFLAAGIVLSLSS, VTLFGLTLICAGFSVGFGVAM, ALGPFSLRAGVASSVLGIAQV, and ALNMLIGILIGCSMVCILLLMTI.

Belongs to the major facilitator superfamily. DHA1 family. MdtL (TC 2.A.1.2.22) subfamily.

The protein resides in the cell inner membrane. The chain is Multidrug resistance protein MdtL from Citrobacter koseri (strain ATCC BAA-895 / CDC 4225-83 / SGSC4696).